Here is a 93-residue protein sequence, read N- to C-terminus: Large ribosomal subunit protein uL23cy (93 aa).

It belongs to the universal ribosomal protein uL23 family. As to quaternary structure, part of the 50S ribosomal subunit.

The protein resides in the plastid. It localises to the chloroplast. Binds to 23S rRNA. In Sorghum bicolor (Sorghum), this protein is Large ribosomal subunit protein uL23cy (rpl23-B).